The sequence spans 554 residues: Probable phospholipase D F09G2.8 (554 aa).

Topologically, residues 1–123 (MPLRLINFRQ…GNSRNRIIKP (123 aa)) are cytoplasmic. A helical; Signal-anchor for type II membrane protein membrane pass occupies residues 124–144 (ACVPISIVSLFIIALVFLPLF). At 145 to 554 (NEEDLASPIK…DWNSEYSKDL (410 aa)) the chain is on the extracellular side. N-linked (GlcNAc...) asparagine glycosylation is found at Asn-181, Asn-208, Asn-244, and Asn-266. In terms of domain architecture, PLD phosphodiesterase 1 spans 272 to 299 (GSGIIHTKFILSDIATLYIGSANMDWKS). Catalysis depends on residues His-277, Lys-279, and Asp-284. Asn-333, Asn-350, Asn-468, and Asn-513 each carry an N-linked (GlcNAc...) asparagine glycan. Positions 492 to 518 (FTRVNHAKYMVTEDIAYIGTSNWSGDY) constitute a PLD phosphodiesterase 2 domain.

Belongs to the phospholipase D family.

It is found in the membrane. It catalyses the reaction a 1,2-diacyl-sn-glycero-3-phosphocholine + H2O = a 1,2-diacyl-sn-glycero-3-phosphate + choline + H(+). This Caenorhabditis elegans protein is Probable phospholipase D F09G2.8.